We begin with the raw amino-acid sequence, 126 residues long: Holo-[acyl-carrier-protein] synthase (126 aa).

Aspartate 9 and glutamate 57 together coordinate Mg(2+).

This sequence belongs to the P-Pant transferase superfamily. AcpS family. Mg(2+) is required as a cofactor.

It is found in the cytoplasm. The enzyme catalyses apo-[ACP] + CoA = holo-[ACP] + adenosine 3',5'-bisphosphate + H(+). Functionally, transfers the 4'-phosphopantetheine moiety from coenzyme A to a Ser of acyl-carrier-protein. The polypeptide is Holo-[acyl-carrier-protein] synthase (Idiomarina loihiensis (strain ATCC BAA-735 / DSM 15497 / L2-TR)).